Reading from the N-terminus, the 265-residue chain is Glutamate racemase (265 aa).

Substrate is bound by residues 12 to 13 and 44 to 45; these read DS and YG. Residue C75 is the Proton donor/acceptor of the active site. Residue 76–77 coordinates substrate; the sequence is NT. C186 functions as the Proton donor/acceptor in the catalytic mechanism. A substrate-binding site is contributed by 187-188; it reads TH.

It belongs to the aspartate/glutamate racemases family.

It catalyses the reaction L-glutamate = D-glutamate. The protein operates within cell wall biogenesis; peptidoglycan biosynthesis. Provides the (R)-glutamate required for cell wall biosynthesis. This is Glutamate racemase from Pseudomonas putida (strain W619).